The primary structure comprises 249 residues: Cis-4-hydroxycyclohexanecarboxylate dehydrogenase (249 aa).

Residues D38, D63, V64, N90, Y156, K160, A189, and T191 each contribute to the NAD(+) site. Y156 (proton acceptor) is an active-site residue.

Belongs to the short-chain dehydrogenases/reductases (SDR) family. Homotetramer.

The catalysed reaction is cis-4-hydroxycyclohexane-1-carboxylate + NAD(+) = 4-oxocyclohexane-1-carboxylate + NADH + H(+). Its function is as follows. Dehydrogenase involved in a cyclohexanecarboxylate (CHCA) degradation pathway. Catalyzes the NAD(+)-dependent dehydrogenation of cis-4-hydroxycyclohexanecarboxylate (cis-4-hydroxyCHCA) to form 4-oxocyclohexanecarboxylate (4-oxoCHCA). Is highly specific for the cis-4-hydroxy derivative and shows only weak activity with trans-4-hydroxyCHCA. Cannot use NADP(+). This Sinomonas cyclohexanicum (Corynebacterium cyclohexanicum) protein is Cis-4-hydroxycyclohexanecarboxylate dehydrogenase.